Reading from the N-terminus, the 596-residue chain is PDZ and LIM domain protein 5 (596 aa).

Position 2 is an N-acetylserine (S2). The residue at position 2 (S2) is a Phosphoserine. Residues 2–85 (SNYSVSLVGP…SLNMTLQRAS (84 aa)) form the PDZ domain. K89 carries the post-translational modification N6-acetyllysine; alternate. The residue at position 89 (K89) is an N6-succinyllysine; alternate. Residue K89 forms a Glycyl lysine isopeptide (Lys-Gly) (interchain with G-Cter in SUMO2); alternate linkage. Residues S111, S134, and S137 each carry the phosphoserine modification. 3 disordered regions span residues 121–165 (NNMA…SPSP), 196–240 (AGKT…GPPR), and 255–340 (THSD…RPGV). Polar residues predominate over residues 134–143 (SVSSPKVTSI). Over residues 144–165 (PSPSSAFTPAHATTSSHASPSP) the composition is skewed to low complexity. 2 stretches are compositionally biased toward polar residues: residues 205-219 (RQPT…TSQE) and 226-237 (RGSQGDSKQQNG). S228 and S260 each carry phosphoserine. 2 stretches are compositionally biased toward basic and acidic residues: residues 258–273 (DASK…DWRP) and 293–304 (EHLKESEADNTK). Positions 305–335 (KANNSQEPSPQLASSVASTRSMPESLDSPTS) are enriched in polar residues. 3 positions are modified to phosphoserine: S309, S313, and S322. At K350 the chain carries N6-acetyllysine. Positions 354–381 (STGVIKSPSWQRPNQGVPSTGRISNSAT) are disordered. A phosphoserine mark is found at S360 and S362. The span at 361 to 381 (PSWQRPNQGVPSTGRISNSAT) shows a compositional bias: polar residues. LIM zinc-binding domains are found at residues 418–477 (PMCA…FFAP), 477–536 (PECG…LFGT), and 536–596 (TICH…SVNF).

In terms of assembly, interacts with various PKC isoforms through the LIM domains. Interacts with actin and alpha-actinin through the PDZ domain. Interacts (via LIM domains) with SIPA1L1/SPAR; this interaction may occur preferentially with isoform 1. As to expression, heart and skeletal muscle specific. Expression is commonly increased in the brain of patients with bipolar disorder, schizophrenia, and major depression.

The protein resides in the postsynaptic density. Its subcellular location is the presynapse. It is found in the postsynapse. The protein localises to the cytoplasm. It localises to the cytosol. Functionally, may play an important role in the heart development by scaffolding PKC to the Z-disk region. May play a role in the regulation of cardiomyocyte expansion. Isoforms lacking the LIM domains may negatively modulate the scaffolding activity of isoform 1. Overexpression promotes the development of heart hypertrophy. Contributes to the regulation of dendritic spine morphogenesis in neurons. May be required to restrain postsynaptic growth of excitatory synapses. Isoform 1, but not isoform 2, expression favors spine thinning and elongation. The polypeptide is PDZ and LIM domain protein 5 (Homo sapiens (Human)).